The sequence spans 326 residues: Beta-ketoacyl-[acyl-carrier-protein] synthase III (326 aa).

Active-site residues include Cys-112 and His-251. Residues 252–256 (QANSR) are ACP-binding. The active site involves Asn-281.

Belongs to the thiolase-like superfamily. FabH family. In terms of assembly, homodimer.

It is found in the cytoplasm. It catalyses the reaction malonyl-[ACP] + acetyl-CoA + H(+) = 3-oxobutanoyl-[ACP] + CO2 + CoA. It participates in lipid metabolism; fatty acid biosynthesis. In terms of biological role, catalyzes the condensation reaction of fatty acid synthesis by the addition to an acyl acceptor of two carbons from malonyl-ACP. Catalyzes the first condensation reaction which initiates fatty acid synthesis and may therefore play a role in governing the total rate of fatty acid production. Possesses both acetoacetyl-ACP synthase and acetyl transacylase activities. Its substrate specificity determines the biosynthesis of branched-chain and/or straight-chain of fatty acids. The chain is Beta-ketoacyl-[acyl-carrier-protein] synthase III from Clostridium botulinum (strain Loch Maree / Type A3).